A 221-amino-acid chain; its full sequence is Probable septum site-determining protein MinC (221 aa).

Belongs to the MinC family. In terms of assembly, interacts with MinD and FtsZ.

Its function is as follows. Cell division inhibitor that blocks the formation of polar Z ring septums. Rapidly oscillates between the poles of the cell to destabilize FtsZ filaments that have formed before they mature into polar Z rings. Prevents FtsZ polymerization. The sequence is that of Probable septum site-determining protein MinC from Aliivibrio fischeri (strain ATCC 700601 / ES114) (Vibrio fischeri).